The sequence spans 468 residues: MMTSPLTQRGALSLLLLLMPAVTPTWYAGSGYSPDESYNEVYAEEVPAARARALDYRVPRWCYTLNIQDGEATCYSPRGGNYHSSLGTRCELSCDRGFRLIGRKSVQCLPSRRWSGTAYCRQIRCHTLPFITSGTYTCTNGMLLDSRCDYSCSSGYHLEGDRSRICMEDGRWSGGEPVCVDIDPPKIRCPHSREKMAEPEKLTARVYWDPPLVKDSADGTITRVTLRGPEPGSHFPEGEHVIRYTAYDRAYNRASCKFIVKVQVRRCPILKPPQHGYLTCSSAGDNYGAICEYHCDGGYERQGTPSRVCQSSRQWSGTPPVCTPMKINVNVNSAAGLLDQFYEKQRLLIVSAPDPSNRYYKMQISMLQQSTCGLDLRHVTIIELVGQPPQEVGRIREQQLSAGIIEELRQFQRLTRSYFNMVLIDKQGIDRERYMEPVTPEEIFTFIDDYLLSNEELARRVEQRDLCE.

A signal peptide spans 1–25 (MMTSPLTQRGALSLLLLLMPAVTPT). 3 Sushi domains span residues 72–122 (ATCY…YCRQ), 123–181 (IRCH…VCVD), and 265–324 (RRCP…VCTP). 4 cysteine pairs are disulfide-bonded: cysteine 74/cysteine 108, cysteine 94/cysteine 120, cysteine 125/cysteine 166, and cysteine 152/cysteine 179. One can recognise an HYR domain in the interval 180-264 (VDIDPPKIRC…SCKFIVKVQV (85 aa)). Disulfide bonds link cysteine 267–cysteine 309 and cysteine 295–cysteine 322.

In terms of assembly, forms homooligomers. Interacts with PLAUR (via the UPAR/Ly6 domains), ADAMTS4 and CTSB. Interacts with HGF; the interaction increases the mitogenic activity of HGF. Contains chondroitin sulfate chains. In terms of tissue distribution, expressed in angiogenic endothelial cells (at protein level).

It localises to the secreted. The protein resides in the cytoplasm. The protein localises to the cell surface. It is found in the synapse. Functionally, acts as a ligand for the urokinase plasminogen activator surface receptor. Plays a role in angiogenesis by inducing endothelial cell migration and the formation of vascular network (cords). Involved in cellular migration and adhesion. Increases the phosphorylation levels of FAK. Interacts with and increases the mitogenic activity of HGF. Promotes synapse formation. Required for ultrasonic vocalizations. The sequence is that of Sushi repeat-containing protein SRPX2 (Srpx2) from Mus musculus (Mouse).